A 177-amino-acid polypeptide reads, in one-letter code: Large ribosomal subunit protein uL6 (177 aa).

The protein belongs to the universal ribosomal protein uL6 family. In terms of assembly, part of the 50S ribosomal subunit.

Functionally, this protein binds to the 23S rRNA, and is important in its secondary structure. It is located near the subunit interface in the base of the L7/L12 stalk, and near the tRNA binding site of the peptidyltransferase center. The protein is Large ribosomal subunit protein uL6 of Rhizobium meliloti (strain 1021) (Ensifer meliloti).